The chain runs to 194 residues: MKCPFCGHADDRVLDTRVQKDGSIRRRRECLECKARFSTVETIMLAFPFIIKKDGRREPFSKEKILKGLQASCQKRPVSLAQIDAVVEKISAWVINRGESEISSRLIGKKVMAELKQLDDVAYIRFASVYRTFKDVQEFVETLEDAELLDFVDASNPQLSLTAMTFVESEKSTNHETDSKTPSPRTRPPGPLSN.

The segment at 3-33 (CPFCGHADDRVLDTRVQKDGSIRRRRECLEC) is a zinc-finger region. The ATP-cone domain maps to 48 to 138 (PFIIKKDGRR…VYRTFKDVQE (91 aa)). Positions 168-179 (ESEKSTNHETDS) are enriched in basic and acidic residues. The disordered stretch occupies residues 168-194 (ESEKSTNHETDSKTPSPRTRPPGPLSN). A compositionally biased stretch (pro residues) spans 185–194 (RTRPPGPLSN).

It belongs to the NrdR family. Requires Zn(2+) as cofactor.

Functionally, negatively regulates transcription of bacterial ribonucleotide reductase nrd genes and operons by binding to NrdR-boxes. This Bdellovibrio bacteriovorus (strain ATCC 15356 / DSM 50701 / NCIMB 9529 / HD100) protein is Transcriptional repressor NrdR.